Here is a 727-residue protein sequence, read N- to C-terminus: Bromodomain-containing protein C631.02 (727 aa).

Disordered stretches follow at residues 27–231 (AATI…PPMT) and 341–369 (TSYSRPGRRPRSMTAPKGGARTRRQAAMY). The segment covering 56–68 (ENDDGTLDLFGDS) has biased composition (acidic residues). The span at 69-78 (ELEKEQKGDN) shows a compositional bias: basic and acidic residues. A compositionally biased stretch (polar residues) spans 102 to 114 (PSSPTHPSVSNIT). The span at 128–150 (EEEKSSESLDSHTHPPKRVRNED) shows a compositional bias: basic and acidic residues. Residues 153 to 177 (LTFSKTSPVSPSSLKDGASNTVTND) are compositionally biased toward polar residues. Ser162 carries the phosphoserine modification. Residues 206–231 (SKEHSSPHDETVKKEENDKDQYPPMT) are compositionally biased toward basic and acidic residues. Residues 229-335 (PMTKEQHKYI…ATFERQLKQL (107 aa)) enclose the Bromo 1 domain. Residues 388 to 497 (RKDAAEMKFC…SIFQKLWANK (110 aa)) enclose the Bromo 2 domain. Residues 570–650 (RSLSVDIYPP…KGDEIGAEAL (81 aa)) enclose the NET domain. Positions 699 to 727 (IAAYNTKSLGSDDSSSEDDGESSESSDSA) are disordered. The span at 712-727 (SSSEDDGESSESSDSA) shows a compositional bias: acidic residues.

This sequence belongs to the BET family.

Its subcellular location is the nucleus. In Schizosaccharomyces pombe (strain 972 / ATCC 24843) (Fission yeast), this protein is Bromodomain-containing protein C631.02.